Here is a 516-residue protein sequence, read N- to C-terminus: MIKNEIKILSDIEHIKKRSGMYIGSSANETHERFMFGKWESVQYVPGLVKLIDEIIDNSVDEGIRTKFKFANKINVTIKNNQVTVEDNGRGIPQAMVKTPTGEEIPGPVAAWTIPKAGGNFGDDKERVTGGMNGVGSSLTNIFSVMFVGETGDGQNNIVVRCSNGMENKSWEDIPGKWKGTRVTFIPDFMSFETNELSQVYLDITLDRLQTLAVVYPDIQFTFNGKKVQGNFKKYARQYDEHAIVQEQENCSIAVGRSPDGFRQLTYVNNIHTKNGGHHIDCAMDDICEDLIPQIKRKFKIDVTKARVKECLTIVMFVRDMKNMRLIRQTKERLTSPFGEIRSHIQLDAKKISRDILNNEAILMPIIEAALARKLAAEKAAETKAAKKASKAKVHKHIKANLCGKDADTTLFLTEGDSAIGYLIDVRDKELHGGYPLRGKVLNSWGMSYADMLKNKELFDICAITGLVLGEKAFEEKEDGEWFTFELNGDTIIVNENDEVQINGKWITVGELRKNL.

ATP is bound at residue 128-136 (VTGGMNGVG). A DNA-binding region spans residues 369 to 400 (AALARKLAAEKAAETKAAKKASKAKVHKHIKA).

This sequence belongs to the type II topoisomerase family. In terms of assembly, part of the DNA topoisomerase complex made of gp39, gp52 and gp60. It depends on Mg(2+) as a cofactor.

It catalyses the reaction ATP-dependent breakage, passage and rejoining of double-stranded DNA.. Its function is as follows. Large subunit of the DNA topoisomerase that untwists superhelical DNA. Controls of topological states of double-stranded DNA by transient breakage and subsequent rejoining of DNA strands. This is DNA topoisomerase large subunit (39) from Escherichia coli (Bacteriophage T4).